The sequence spans 499 residues: Probable dipeptidase B (499 aa).

The active site involves cysteine 26.

This sequence belongs to the peptidase C69 family.

The catalysed reaction is an L-aminoacyl-L-amino acid + H2O = 2 an L-alpha-amino acid. The chain is Probable dipeptidase B (pepDB) from Streptococcus pyogenes serotype M6 (strain ATCC BAA-946 / MGAS10394).